The sequence spans 183 residues: Ribosome rescue factor SmrB (183 aa).

The region spanning 98 to 173 (LDLHGLTQLQ…GDAALLVLIE (76 aa)) is the Smr domain.

The protein belongs to the SmrB family. Associates with collided ribosomes, but not with correctly translating polysomes.

Its function is as follows. Acts as a ribosome collision sensor. Detects stalled/collided disomes (pairs of ribosomes where the leading ribosome is stalled and a second ribosome has collided with it) and endonucleolytically cleaves mRNA at the 5' boundary of the stalled ribosome. Stalled/collided disomes form a new interface (primarily via the 30S subunits) that binds SmrB. Cleaved mRNA becomes available for tmRNA ligation, leading to ribosomal subunit dissociation and rescue of stalled ribosomes. The sequence is that of Ribosome rescue factor SmrB from Shigella dysenteriae serotype 1 (strain Sd197).